A 528-amino-acid chain; its full sequence is Peptide chain release factor 3 (528 aa).

The 270-residue stretch at Ala-10 to Met-279 folds into the tr-type G domain. Residues Ser-19–Thr-26, Asp-87–His-91, and Asn-141–Asp-144 each bind GTP.

It belongs to the TRAFAC class translation factor GTPase superfamily. Classic translation factor GTPase family. PrfC subfamily.

The protein resides in the cytoplasm. Its function is as follows. Increases the formation of ribosomal termination complexes and stimulates activities of RF-1 and RF-2. It binds guanine nucleotides and has strong preference for UGA stop codons. It may interact directly with the ribosome. The stimulation of RF-1 and RF-2 is significantly reduced by GTP and GDP, but not by GMP. The chain is Peptide chain release factor 3 from Escherichia coli O1:K1 / APEC.